The sequence spans 708 residues: Polyribonucleotide nucleotidyltransferase (708 aa).

Residues Asp485 and Asp491 each coordinate Mg(2+). The KH domain occupies 552–611 (PKTYIMSIPPDKIRDVIGSGGKVINKIIAETGVKIDIKEDGKIFVMSEDSEGAKKALKII). The S1 motif domain occupies 621–689 (GEIYLGKVTK…NQGRINLSRK (69 aa)). The segment at 689 to 708 (KDAIKDSEKKEQNEKDVQKK) is disordered.

Belongs to the polyribonucleotide nucleotidyltransferase family. It depends on Mg(2+) as a cofactor.

It localises to the cytoplasm. It catalyses the reaction RNA(n+1) + phosphate = RNA(n) + a ribonucleoside 5'-diphosphate. In terms of biological role, involved in mRNA degradation. Catalyzes the phosphorolysis of single-stranded polyribonucleotides processively in the 3'- to 5'-direction. This chain is Polyribonucleotide nucleotidyltransferase, found in Clostridium kluyveri (strain NBRC 12016).